The following is a 424-amino-acid chain: Probable ribonuclease FAU-1 (424 aa).

It belongs to the FAU-1 family.

Its function is as follows. Probable RNase involved in rRNA stability through maturation and/or degradation of precursor rRNAs. Binds to RNA in loop regions with AU-rich sequences. In Saccharolobus islandicus (strain L.S.2.15 / Lassen #1) (Sulfolobus islandicus), this protein is Probable ribonuclease FAU-1.